We begin with the raw amino-acid sequence, 235 residues long: Phosphoribosylaminoimidazole-succinocarboxamide synthase (235 aa).

The protein belongs to the SAICAR synthetase family.

It carries out the reaction 5-amino-1-(5-phospho-D-ribosyl)imidazole-4-carboxylate + L-aspartate + ATP = (2S)-2-[5-amino-1-(5-phospho-beta-D-ribosyl)imidazole-4-carboxamido]succinate + ADP + phosphate + 2 H(+). It participates in purine metabolism; IMP biosynthesis via de novo pathway; 5-amino-1-(5-phospho-D-ribosyl)imidazole-4-carboxamide from 5-amino-1-(5-phospho-D-ribosyl)imidazole-4-carboxylate: step 1/2. The polypeptide is Phosphoribosylaminoimidazole-succinocarboxamide synthase (Streptococcus pneumoniae (strain ATCC 700669 / Spain 23F-1)).